A 728-amino-acid chain; its full sequence is Golgin subfamily A member 5 (728 aa).

At Ser-2 the chain carries N-acetylserine. Residues 2 to 695 (SWFADLAGRA…IFLRRYPIAR (694 aa)) lie on the Cytoplasmic side of the membrane. A dimethylated arginine mark is found at Arg-27 and Arg-89. The segment at 88–202 (SRTGGDASHP…KKSTEESTVS (115 aa)) is disordered. Position 116 is a phosphoserine (Ser-116). Basic and acidic residues predominate over residues 134–146 (PTGRVEIKKEKGK). Low complexity predominate over residues 152 to 167 (SSQSSAVSSVTTSVTT). Residues 173-187 (ENSGSQSPEVSSSDS) show a composition bias toward polar residues. Residues 216–628 (GSMSHELSNL…LEQQLHSAAT (413 aa)) adopt a coiled-coil conformation. The chain crosses the membrane as a helical; Anchor for type IV membrane protein span at residues 696-716 (VFVIIYMALLHLWVMIVLLTY). Topologically, residues 717-728 (SPEMHHDQPYGK) are lumenal.

Homodimer. Interacts with RAB1A that has been activated by GTP-binding. Interacts with isoform CASP of CUX1. In terms of processing, highly phosphorylated during mitosis. Phosphorylation is barely detectable during interphase.

The protein localises to the golgi apparatus membrane. Functionally, involved in maintaining Golgi structure. Stimulates the formation of Golgi stacks and ribbons. Involved in intra-Golgi retrograde transport. The sequence is that of Golgin subfamily A member 5 (Golga5) from Rattus norvegicus (Rat).